Reading from the N-terminus, the 101-residue chain is Large ribosomal subunit protein uL24 (101 aa).

This sequence belongs to the universal ribosomal protein uL24 family. Part of the 50S ribosomal subunit.

In terms of biological role, one of two assembly initiator proteins, it binds directly to the 5'-end of the 23S rRNA, where it nucleates assembly of the 50S subunit. One of the proteins that surrounds the polypeptide exit tunnel on the outside of the subunit. The sequence is that of Large ribosomal subunit protein uL24 from Clostridioides difficile (strain 630) (Peptoclostridium difficile).